The following is a 306-amino-acid chain: Methionyl-tRNA formyltransferase (306 aa).

108–111 contributes to the (6S)-5,6,7,8-tetrahydrofolate binding site; the sequence is SLLP.

This sequence belongs to the Fmt family.

The catalysed reaction is L-methionyl-tRNA(fMet) + (6R)-10-formyltetrahydrofolate = N-formyl-L-methionyl-tRNA(fMet) + (6S)-5,6,7,8-tetrahydrofolate + H(+). In terms of biological role, attaches a formyl group to the free amino group of methionyl-tRNA(fMet). The formyl group appears to play a dual role in the initiator identity of N-formylmethionyl-tRNA by promoting its recognition by IF2 and preventing the misappropriation of this tRNA by the elongation apparatus. This Pseudarthrobacter chlorophenolicus (strain ATCC 700700 / DSM 12829 / CIP 107037 / JCM 12360 / KCTC 9906 / NCIMB 13794 / A6) (Arthrobacter chlorophenolicus) protein is Methionyl-tRNA formyltransferase.